The following is a 539-amino-acid chain: Lipid scramblase CLPTM1L (539 aa).

Residues 1–10 are Cytoplasmic-facing; it reads MWSGRSSFTS. A helical membrane pass occupies residues 11-31; it reads LVVGVFLVYVVHTCWVMYGIV. Over 32 to 285 the chain is Extracellular; it reads YTRPCSGDSN…LKGIFVDTNL (254 aa). Asn-91 and Asn-101 each carry an N-linked (GlcNAc...) asparagine glycan. The chain crosses the membrane as a helical span at residues 286–306; sequence YLLALTFFVAAFHLLFDFLAF. Over 307–325 the chain is Cytoplasmic; it reads KSDISFWKKKKSMIGMSTK. The chain crosses the membrane as a helical span at residues 326–342; the sequence is AVLWRCFSTVVIFLFLL. At 343-403 the chain is on the extracellular side; sequence DEQTSLLVLI…TEKYDAQAMK (61 aa). The helical transmembrane segment at 404-424 threads the bilayer; that stretch reads YLSYLLYPLCVGGAVYSLLNI. Over 425 to 429 the chain is Cytoplasmic; the sequence is KYKSW. Residues 430 to 450 form a helical membrane-spanning segment; sequence YSWLINSFVNGVYAFGFLFML. Over 451–539 the chain is Extracellular; sequence PQLFVNYKMK…EQPKRKPHPD (89 aa).

Belongs to the CLPTM1 family.

It localises to the endoplasmic reticulum membrane. It carries out the reaction a 6-(alpha-D-glucosaminyl)-1-(1,2-diacyl-sn-glycero-3-phospho)-1D-myo-inositol(in) = a 6-(alpha-D-glucosaminyl)-1-(1,2-diacyl-sn-glycero-3-phospho)-1D-myo-inositol(out). It catalyses the reaction 6-(alpha-D-glucosaminyl)-(1-octadecanoyl,2-(9Z)-octadecenoyl-sn-glycero-3-phospho)-1D-myo-inositol(in) = 6-(alpha-D-glucosaminyl)-(1-octadecanoyl,2-(9Z)-octadecenoyl-sn-glycero-3-phospho)-1D-myo-inositol(out). The enzyme catalyses a 1,2-diacyl-sn-glycero-3-phospho-(1D-myo-inositol)(in) = a 1,2-diacyl-sn-glycero-3-phospho-(1D-myo-inositol)(out). The catalysed reaction is a 1,2-diacyl-sn-glycero-3-phosphocholine(in) = a 1,2-diacyl-sn-glycero-3-phosphocholine(out). It carries out the reaction a 1,2-diacyl-sn-glycero-3-phosphoethanolamine(in) = a 1,2-diacyl-sn-glycero-3-phosphoethanolamine(out). Functionally, scramblase that mediates the translocation of glucosaminylphosphatidylinositol (alpha-D-GlcN-(1-6)-(1,2-diacyl-sn-glycero-3-phospho)-1D-myo-inositol, GlcN-PI) across the endoplasmic reticulum (ER) membrane, from the cytosolic leaflet to the luminal leaflet of the ER membrane, where it participates in the biosynthesis of glycosylphosphatidylinositol (GPI). GPI is a lipid glycoconjugate involved in post-translational modification of proteins. Can also translocate 1,2-diacyl-sn-glycero-3-phospho-(1D-myo-inositol) (phosphatidylinositol or PI), as well as several other phospholipids (1,2-diacyl-sn-glycero-3-phosphocholine, 1,2-diacyl-sn-glycero-3-phosphoethanolamine), and N-acetylglucosaminylphosphatidylinositol (GlcNAc-PI) in vitro. The sequence is that of Lipid scramblase CLPTM1L (Clptm1l) from Mus musculus (Mouse).